Here is a 349-residue protein sequence, read N- to C-terminus: Heat-inducible transcription repressor HrcA (349 aa).

This sequence belongs to the HrcA family.

Negative regulator of class I heat shock genes (grpE-dnaK-dnaJ and groELS operons). Prevents heat-shock induction of these operons. The chain is Heat-inducible transcription repressor HrcA from Lactobacillus acidophilus (strain ATCC 700396 / NCK56 / N2 / NCFM).